A 490-amino-acid polypeptide reads, in one-letter code: MARFGTQKLYIDGAYVDAGSDATFEAINPATGEVLAHVQRATEADVEKAVESAERGQKVWAAMTAMQRSRILRRAVDILRERNDELAMLETLDTGKSYSETRYVDIVTGADVLEYYAGLVPAIEGEQIPLRESSFVYTRREPLGVTVGIGAWNYPIQIALWKSAPALAAGNAMIFKPSEVTSLTTLKLAEIYTEAGLPNGVFNVLTGSGREVGTWLTEHPRIEKVSFTGGTTTGKKVMASASSSSLKEVTMELGGKSPLIICADADLDKAADIAMMANFYSSGQVCTNGTRVFIPAEMKAAFEAKIAERVARIRVGNPEDENTNFGPLVSFQHMESVLGYIAKGKEEGARVLCGGERLTAGDFAKGAFVAPTVFTDCTDDMTIVKEEIFGPVMSILTYETEEEVIRRANDTDYGLAAGVCTNDITRAHRIIHKLEAGICWINAWGESPAEMPVGGYKQSGVGRENGVSSLAQYTRIKSVQVELGGYNSVF.

K(+) is bound by residues isoleucine 27 and aspartate 93. Position 150–152 (150–152 (GAW)) interacts with NAD(+). Lysine 162 functions as the Charge relay system in the catalytic mechanism. NAD(+) is bound at residue 176–179 (KPSE). Valine 180 contacts K(+). NAD(+) is bound at residue 230-233 (GTTT). Leucine 246 is a binding site for K(+). Glutamate 252 acts as the Proton acceptor in catalysis. NAD(+) contacts are provided by glycine 254, cysteine 286, and glutamate 387. Cysteine 286 functions as the Nucleophile in the catalytic mechanism. Position 286 is a cysteine sulfenic acid (-SOH) (cysteine 286). Lysine 457 and glycine 460 together coordinate K(+). Catalysis depends on glutamate 464, which acts as the Charge relay system.

This sequence belongs to the aldehyde dehydrogenase family. Dimer of dimers. K(+) serves as cofactor.

It catalyses the reaction betaine aldehyde + NAD(+) + H2O = glycine betaine + NADH + 2 H(+). Its pathway is amine and polyamine biosynthesis; betaine biosynthesis via choline pathway; betaine from betaine aldehyde: step 1/1. Functionally, involved in the biosynthesis of the osmoprotectant glycine betaine. Catalyzes the irreversible oxidation of betaine aldehyde to the corresponding acid. The chain is Betaine aldehyde dehydrogenase from Pseudomonas putida (strain ATCC 700007 / DSM 6899 / JCM 31910 / BCRC 17059 / LMG 24140 / F1).